The primary structure comprises 261 residues: DNA repair protein RecO (261 aa).

It belongs to the RecO family.

Its function is as follows. Involved in DNA repair and RecF pathway recombination. The sequence is that of DNA repair protein RecO from Pelodictyon phaeoclathratiforme (strain DSM 5477 / BU-1).